Consider the following 430-residue polypeptide: Enolase (430 aa).

(2R)-2-phosphoglycerate is bound at residue Gln165. Catalysis depends on Glu207, which acts as the Proton donor. 3 residues coordinate Mg(2+): Asp244, Glu287, and Asp314. Positions 339, 368, 369, and 390 each coordinate (2R)-2-phosphoglycerate. The active-site Proton acceptor is the Lys339.

The protein belongs to the enolase family. In terms of assembly, component of the RNA degradosome, a multiprotein complex involved in RNA processing and mRNA degradation. The cofactor is Mg(2+).

Its subcellular location is the cytoplasm. It is found in the secreted. The protein localises to the cell surface. The catalysed reaction is (2R)-2-phosphoglycerate = phosphoenolpyruvate + H2O. Its pathway is carbohydrate degradation; glycolysis; pyruvate from D-glyceraldehyde 3-phosphate: step 4/5. Catalyzes the reversible conversion of 2-phosphoglycerate (2-PG) into phosphoenolpyruvate (PEP). It is essential for the degradation of carbohydrates via glycolysis. This is Enolase from Xylella fastidiosa (strain M23).